A 371-amino-acid chain; its full sequence is Alanine dehydrogenase (371 aa).

The substrate site is built by Arg15 and Lys75. His96 acts as the Proton donor/acceptor in catalysis. NAD(+) contacts are provided by residues Ser134, 178-179 (TA), Asp198, Ser220, 239-240 (VL), 267-270 (IAID), Arg279, and 298-301 (VANM). Asp270 acts as the Proton donor/acceptor in catalysis.

Belongs to the AlaDH/PNT family. As to quaternary structure, homohexamer. Trimer of dimers.

Its subcellular location is the cytoplasm. It catalyses the reaction L-alanine + NAD(+) + H2O = pyruvate + NH4(+) + NADH + H(+). It functions in the pathway amino-acid degradation; L-alanine degradation via dehydrogenase pathway; NH(3) and pyruvate from L-alanine: step 1/1. Its function is as follows. Catalyzes the reversible reductive amination of pyruvate to L-alanine. Required for proficient utilization of D- or L-alanine as a nitrogen source. May be required for the adaptation from aerobic growth to anaerobic dormancy. It could be involved in the maintenance of the NAD pool during the shift to an anaerobic dormant state in which oxygen as a terminal electron acceptor becomes limiting. The chain is Alanine dehydrogenase from Mycolicibacterium smegmatis (strain ATCC 700084 / mc(2)155) (Mycobacterium smegmatis).